The chain runs to 448 residues: Gamma conglutin 2 (448 aa).

An N-terminal signal peptide occupies residues 1–33; that stretch reads MAKNMAQIFPFIAVFLSCSFIFVLSSSQNSQSL. Residues 63 to 428 enclose the Peptidase A1 domain; that stretch reads HWANIHKRTP…DLERSRVEFN (366 aa). 5 disulfide bridges follow: Cys91/Cys181, Cys105/Cys118, Cys110/Cys136, Cys121/Cys131, and Cys349/Cys390. Residue Asn133 is glycosylated (N-linked (GlcNAc...) asparagine).

The protein belongs to the peptidase A1 family. In terms of assembly, two-subunit monomeric unit made of alpha and beta subunits coupled by disulfide bonds (at pH 4.5 and under non-reducing conditions). Can also form oligomers including dimer, tetramer and cyclic hexamer (trimer of dimers) (at pH &gt; 5.5). Component of globulins complexes which accumulate in seeds. Interacts with flavonoids (e.g. apigenin glucosides) present in globulins complexes. Post-translationally, glycosylated on alpha chain. In terms of tissue distribution, expressed in developing seeds and in the young roots and cotyledons of germinating seeds and young seedlings.

The protein resides in the secreted. It is found in the extracellular space. Its function is as follows. Sulfur-rich seed storage protein that remains undegraded at germination. The polypeptide is Gamma conglutin 2 (Lupinus albus (White lupine)).